Consider the following 275-residue polypeptide: Urease accessory protein UreD (275 aa).

Belongs to the UreD family. UreD, UreF and UreG form a complex that acts as a GTP-hydrolysis-dependent molecular chaperone, activating the urease apoprotein by helping to assemble the nickel containing metallocenter of UreC. The UreE protein probably delivers the nickel.

The protein resides in the cytoplasm. Required for maturation of urease via the functional incorporation of the urease nickel metallocenter. The polypeptide is Urease accessory protein UreD (Cereibacter sphaeroides (strain ATCC 17023 / DSM 158 / JCM 6121 / CCUG 31486 / LMG 2827 / NBRC 12203 / NCIMB 8253 / ATH 2.4.1.) (Rhodobacter sphaeroides)).